We begin with the raw amino-acid sequence, 144 residues long: Small ribosomal subunit protein eS19 (144 aa).

Belongs to the eukaryotic ribosomal protein eS19 family.

This chain is Small ribosomal subunit protein eS19 (RPS19), found in Argopecten irradians (Bay scallop).